We begin with the raw amino-acid sequence, 515 residues long: G-protein coupled receptor 176 (515 aa).

Topologically, residues 1-41 (MGHNSSWVSPNTSHPRNTSGAEAGANLSAFGELSEAQLYRQ) are extracellular. Residues Asn4, Asn11, Asn17, and Asn26 are each glycosylated (N-linked (GlcNAc...) asparagine). Residues 42–64 (FTTTVQVVIFIGSLLGNFMVLWS) traverse the membrane as a helical segment. Over 65-77 (TCRTTVFKSVTNR) the chain is Cytoplasmic. The helical transmembrane segment at 78 to 98 (FIKNLACSGICASVVCVPFDI) threads the bilayer. The Extracellular portion of the chain corresponds to 99–108 (ILSSSPHCCW). Residues 109-129 (WIYTMLFCKVLKFLHKVFCSV) form a helical membrane-spanning segment. Topologically, residues 130–157 (TVLSFPAIALDRYYSVLYPLERKISDAK) are cytoplasmic. A helical transmembrane segment spans residues 158 to 177 (SRELVMYIWAHAVVASVPVF). The Extracellular portion of the chain corresponds to 178-204 (AVTNVADIYAMSTCTEVWSNSLGHLVY). The helical transmembrane segment at 205-225 (VLIYNVTTVIVPVAVVFLFLI) threads the bilayer. Over 226-264 (LIRRALSASQKKKVIIAALRTPQNTISIPYASQREAELH) the chain is Cytoplasmic. A helical transmembrane segment spans residues 265-285 (ATLLSMVTVFILCSVPYATLV). Residues 286-301 (VYQTVLNVPNTSVFLL) are Extracellular-facing. Residues 302-322 (LTAIWLPKVSLLANPVLFLTV) form a helical membrane-spanning segment. At 323–515 (NKSVRKCLVG…KVSIFPKVDS (193 aa)) the chain is on the cytoplasmic side. The segment at 407–435 (SCPEGEQEPPQLAPSVPPPGTVDSEPRVS) is disordered. The segment covering 417-426 (QLAPSVPPPG) has biased composition (pro residues).

It belongs to the G-protein coupled receptor 1 family. In terms of tissue distribution, expressed mainly in the brain, with prominent expression in the SCN (at protein level).

The protein resides in the cell membrane. Functionally, orphan receptor involved in normal circadian rhythm behavior. Acts through the G-protein subclass G(z)-alpha and has an agonist-independent basal activity to repress cAMP production. This Mus musculus (Mouse) protein is G-protein coupled receptor 176 (Gpr176).